The following is a 184-amino-acid chain: Ras-related protein RabN2 (184 aa).

Position 3–10 (3–10) interacts with GTP; the sequence is GDYRSGKT. The Effector region signature appears at 25–32; sequence TNPSTFDY. GTP is bound by residues 50–54 and 117–120; these read DTAGH and TKSD.

This sequence belongs to the small GTPase superfamily. Rab family.

The polypeptide is Ras-related protein RabN2 (rabN2) (Dictyostelium discoideum (Social amoeba)).